We begin with the raw amino-acid sequence, 108 residues long: Precursor of CEP16 (108 aa).

The first 27 residues, 1–27 (MVMAKNLTKFYVVFLVVLMMVVSLLLA), serve as a signal peptide directing secretion. A propeptide spanning residues 28–92 (IEGRPVKDSS…VGHHRAKGYK (65 aa)) is cleaved from the precursor. 2 N-linked (GlcNAc...) asparagine glycosylation sites follow: Asn50 and Asn98. A disordered region spans residues 76 to 108 (QSGPSPGVGHHRAKGYKMFGRANDSGPSPGVGH). A hydroxyproline mark is found at Pro102 and Pro104.

The protein belongs to the C-terminally encoded plant signaling peptide (CEP) family. As to quaternary structure, interacts with CEP receptors (e.g. CEPR1 and CEPR2). Post-translationally, the mature small signaling peptide is generated by proteolytic processing of the longer precursor.

The protein localises to the secreted. It localises to the extracellular space. The protein resides in the apoplast. Its function is as follows. Extracellular signaling peptide that may regulate primary root growth rate and systemic nitrogen (N)-demand signaling. This Arabidopsis thaliana (Mouse-ear cress) protein is Precursor of CEP16.